Consider the following 77-residue polypeptide: Putative defensin-like protein 129 (77 aa).

The signal sequence occupies residues Met-1–Gly-25. Disulfide bonds link Cys-28-Cys-77, Cys-37-Cys-59, Cys-42-Cys-71, and Cys-46-Cys-73.

It belongs to the DEFL family.

The protein resides in the secreted. This Arabidopsis thaliana (Mouse-ear cress) protein is Putative defensin-like protein 129 (LCR13).